The following is a 430-amino-acid chain: Protein POLLENLESS 3-LIKE 2 (430 aa).

The segment at 1-21 is disordered; that stretch reads MMRDVFRPTKSAPCSPAKPLG. 6 TPR repeats span residues 40 to 73, 74 to 107, 110 to 143, 170 to 203, 205 to 236, and 238 to 257; these read DSPY…GDRV, DSAL…CSDQ, ESLD…IQKG, TRLL…APDN, KMCN…VVDG, and RGVD…LNDL. The stretch at 81-107 forms a coiled coil; the sequence is AIVMKQQNRAEEAIEAIKSLRVRCSDQ. Residues 346–376 are disordered; the sequence is KLKRTRSSSQGMGMLSGIGGDHEGETNTSTR.

Belongs to the MS5 protein family.

The protein localises to the nucleus. Probably involved in the regulation of cell division. This chain is Protein POLLENLESS 3-LIKE 2, found in Arabidopsis thaliana (Mouse-ear cress).